A 476-amino-acid chain; its full sequence is Probable cytosolic Fe-S cluster assembly factor GH10760 (476 aa).

Residues Cys-23, Cys-68, Cys-71, Cys-74, Cys-187, Cys-243, Cys-395, and Cys-399 each contribute to the [4Fe-4S] cluster site.

This sequence belongs to the NARF family.

Its function is as follows. Component of the cytosolic iron-sulfur (Fe/S) protein assembly machinery. Required for maturation of extramitochondrial Fe/S proteins. The sequence is that of Probable cytosolic Fe-S cluster assembly factor GH10760 from Drosophila grimshawi (Hawaiian fruit fly).